We begin with the raw amino-acid sequence, 1033 residues long: Immunoglobulin superfamily member 2 (1033 aa).

The signal sequence occupies residues 1–20; the sequence is MACILCVASLFLSLTKFSIG. At 21 to 970 the chain is on the extracellular side; sequence QREVKIQEGP…VSSLICSSGP (950 aa). 7 Ig-like C2-type domains span residues 22 to 141, 144 to 266, 279 to 388, 408 to 529, 539 to 657, 670 to 797, and 806 to 941; these read REVK…TNLT, PDTL…TLIT, PAAR…TQMG, PAAR…QKIS, LRVN…ARVS, PESK…RKTS, and PTGS…KWIN. Cys43 and Cys121 are oxidised to a cystine. A glycan (N-linked (GlcNAc...) asparagine) is linked at Asn139. Cys168 and Cys249 form a disulfide bridge. Residues 253-255 carry the EWI motif motif; that stretch reads EWI. Cystine bridges form between Cys304–Cys377, Cys432–Cys509, and Cys560–Cys638. N-linked (GlcNAc...) asparagine glycosylation occurs at Asn677. 2 disulfide bridges follow: Cys695/Cys776 and Cys832/Cys925. Residues 971–991 traverse the membrane as a helical segment; the sequence is LLHFLIVCPFVMLLLLATSFL. Residues 992-1033 are Cytoplasmic-facing; sequence CLYRKARKLSQLSLSAKKEKALWVGMRKTSLQKEAGEESGHY.

N-glycosylated.

Its subcellular location is the membrane. Functionally, plays a role as inhibitor of T-cells proliferation induced by CD3. Inhibits expression of IL2RA on activated T-cells and secretion of IL2. Inhibits tyrosine kinases that are required for IL2 production and cellular proliferation. Inhibits phospholipase C-gamma-1/PLCG1 phosphorylation and subsequent CD3-induced changes in intracellular free calcium. Prevents nuclear translocation of nuclear factor of activated T-cell to the nucleus. Plays a role in the inhibition of T-cell proliferation via IL10 secretion by cutaneous dendritic cells. The sequence is that of Immunoglobulin superfamily member 2 (Cd101) from Mus musculus (Mouse).